Reading from the N-terminus, the 177-residue chain is Non-specific lipid transfer protein GPI-anchored 22 (177 aa).

A signal peptide spans 1-29 (MARFMAYNQNPQMLALCITVAVMFLGVRS). 4 cysteine pairs are disulfide-bonded: Cys-38–Cys-81, Cys-48–Cys-63, Cys-64–Cys-108, and Cys-79–Cys-117. A glycan (N-linked (GlcNAc...) asparagine) is linked at Asn-113. Ser-152 carries GPI-anchor amidated serine lipidation. Residues 153–177 (SSIKGRDNKQFGLMMAGALSIWYIM) constitute a propeptide, removed in mature form.

This sequence belongs to the plant LTP family. Expressed in seedlings, preferentially in hypocotyls and roots. Also observed in siliques.

Its subcellular location is the cell membrane. Functionally, probable lipid transfer protein. This Arabidopsis thaliana (Mouse-ear cress) protein is Non-specific lipid transfer protein GPI-anchored 22.